The primary structure comprises 217 residues: Small ribosomal subunit protein uS3 (217 aa).

One can recognise a KH type-2 domain in the interval 40–110; the sequence is IRELVNKSFT…EVYINIHEVR (71 aa).

The protein belongs to the universal ribosomal protein uS3 family. As to quaternary structure, part of the 30S ribosomal subunit. Forms a tight complex with proteins S10 and S14.

In terms of biological role, binds the lower part of the 30S subunit head. Binds mRNA in the 70S ribosome, positioning it for translation. This Rickettsia bellii (strain OSU 85-389) protein is Small ribosomal subunit protein uS3.